A 2009-amino-acid chain; its full sequence is Rootletin (2009 aa).

Coiled coils occupy residues 74–265 and 346–438; these read EMAS…VTSD and ASLH…LRLQ. Disordered regions lie at residues 462–519, 575–594, 636–665, 1180–1225, and 1448–1501; these read ALSD…CSDS, RDQT…EAQR, ELKR…LERS, EAQR…ELRS, and GRVS…EAVR. Over residues 463 to 484 the composition is skewed to polar residues; it reads LSDTESGVQLSSSERTADTSDG. Coiled coils occupy residues 550 to 1058 and 1091 to 1439; these read LGSV…LLAE and LEME…GLRS. Residues 577 to 586 are compositionally biased toward low complexity; it reads QTAASAQAQE. A compositionally biased stretch (basic and acidic residues) spans 656-665; that stretch reads ARARRELERS. Serine 1453, serine 1463, and serine 1469 each carry phosphoserine. Tyrosine 1475 is subject to Phosphotyrosine. A phosphoserine mark is found at serine 1476, serine 1479, serine 1483, serine 1489, and serine 1568. The span at 1479–1494 shows a compositional bias: pro residues; sequence SQPPSPGLIASPAPPD. 2 coiled-coil regions span residues 1498-1697 and 1744-1998; these read EAVR…GTLQ and HLQK…RSSA. The tract at residues 1957–2009 is disordered; that stretch reads QVQTERTLEARERAHRQRVSGLEEQVSTLKAQLHQELRRSSASVSLPPGTPEK.

This sequence belongs to the rootletin family. As to quaternary structure, homomer. Interacts with KLC3, NEK2 and the N-terminus of CEP250. Interacts with CEP44. Post-translationally, phosphorylated by NEK2 which may regulate its association with centrosomes. Highest expression detected in photoreceptor cells of retina. Expressed at lower levels in brain, trachea and kidney. Detected in all major ciliated epithelia. During embryonic development, enriched along the apical domains of neuroepithelium in brain ventricular zone, in primordia of retinal pigment epithelia and in neural retina.

The protein resides in the cytoplasm. Its subcellular location is the cytoskeleton. It localises to the microtubule organizing center. The protein localises to the centrosome. It is found in the centriole. The protein resides in the cilium basal body. Its function is as follows. Major structural component of the ciliary rootlet, a cytoskeletal-like structure in ciliated cells which originates from the basal body at the proximal end of a cilium and extends proximally toward the cell nucleus. Furthermore, is required for the correct positioning of the cilium basal body relative to the cell nucleus, to allow for ciliogenesis. Contributes to centrosome cohesion before mitosis. The protein is Rootletin of Mus musculus (Mouse).